The following is a 1006-amino-acid chain: Probable beta-galactosidase A (1006 aa).

An N-terminal signal peptide occupies residues 1 to 18 (MKLLSVCAIALLAAQAAG). Substrate-binding residues include Y96, N140, A141, and E142. A glycan (N-linked (GlcNAc...) asparagine) is linked at N156. Residue N199 coordinates substrate. The active-site Proton donor is the E200. The cysteines at positions 205 and 206 are disulfide-linked. Substrate is bound at residue Y260. C266 and C315 form a disulfide bridge. E298 acts as the Nucleophile in catalysis. Position 364 (Y364) interacts with substrate. N373, N402, N422, N622, N760, N777, and N914 each carry an N-linked (GlcNAc...) asparagine glycan.

It belongs to the glycosyl hydrolase 35 family.

The protein localises to the secreted. The catalysed reaction is Hydrolysis of terminal non-reducing beta-D-galactose residues in beta-D-galactosides.. Its function is as follows. Cleaves beta-linked terminal galactosyl residues from gangliosides, glycoproteins, and glycosaminoglycans. This is Probable beta-galactosidase A (lacA) from Aspergillus fumigatus (strain CBS 144.89 / FGSC A1163 / CEA10) (Neosartorya fumigata).